The primary structure comprises 162 residues: Retinoic acid receptor responder protein 2 (162 aa).

The N-terminal stretch at 1 to 20 (MKCLLISLALWLGTVGTRGT) is a signal peptide. Disulfide bonds link cysteine 79–cysteine 89, cysteine 100–cysteine 119, and cysteine 103–cysteine 134. Residues 157–162 (RALRTK) constitute a propeptide that is removed on maturation.

Secreted in an inactive precursor form, prochemerin, which is proteolytically processed by a variety of extracellular proteases to generate forms with differing levels of bioactivity. For example, the removal of six amino acids results in chemerin-156, which exhibits the highest activity, while removal of seven amino acids results in chemerin-155 which has slightly less activity. Some proteases are able to cleave at more than one site and chemerin forms may be sequentially processed by different enzymes to modulate activity levels. The coordinated expression and activity of chemerin-modifying enzymes is essential for regulating its bioactivation, inactivation and, consequently, biological function. Cathepsin G cleaves seven C-terminal amino acids from prochemerin (chemerin-155), elastase is able to cleave six (chemerin-156), eight (chemerin-154) or eleven (chemerin-151), plasmin cleaves five amino acids (chemerin-157), and tryptase cleaves five (chemerin-157) or eight (chemerin-154). Multiple cleavages might be required to fully activate chemerin, with an initial tryptase cleavage resulting in chemerin with low activity (chemerin-157), and a second cleavage by carboxypeptidase N or B producing highly active chemerin (chemerin-156). As to expression, expressed in the differentiated adipocytes (at protein level). Abundantly expressed in the liver, adipose tissue including visceral, epididymal, and brown adipose tissue.

It is found in the secreted. In terms of biological role, adipocyte-secreted protein (adipokine) that regulates adipogenesis, metabolism and inflammation through activation of the chemokine-like receptor 1 (CMKLR1). Also acts as a ligand for CMKLR2. Can also bind to C-C chemokine receptor-like 2 (CCRL2), but with a lower affinity than it does to CMKLR1 or CMKLR2. Positively regulates adipocyte differentiation, modulates the expression of adipocyte genes involved in lipid and glucose metabolism and might play a role in angiogenesis, a process essential for the expansion of white adipose tissue. Also acts as a pro-inflammatory adipokine, causing an increase in secretion of pro-inflammatory and prodiabetic adipokines, which further impair adipose tissue metabolic function and have negative systemic effects including impaired insulin sensitivity, altered glucose and lipid metabolism, and a decrease in vascular function in other tissues. Can have both pro- and anti-inflammatory properties depending on the modality of enzymatic cleavage by different classes of proteases. Acts as a chemotactic factor for leukocyte populations expressing CMKLR1, particularly immature plasmacytoid dendritic cells, but also immature myeloid DCs, macrophages and natural killer cells. Exerts an anti-inflammatory role by preventing TNF/TNFA-induced VCAM1 expression and monocytes adhesion in vascular endothelial cells. The effect is mediated via inhibiting activation of NF-kappa-B and CRK/p38 through stimulation of AKT1/NOS3 signaling and nitric oxide production. Exhibits an antimicrobial function in the skin. The polypeptide is Retinoic acid receptor responder protein 2 (Rarres2) (Mus musculus (Mouse)).